Here is a 146-residue protein sequence, read N- to C-terminus: SsrA-binding protein (146 aa).

The span at 127–139 shows a compositional bias: basic and acidic residues; the sequence is KRQTIKDRDNSRE. Residues 127–146 are disordered; that stretch reads KRQTIKDRDNSREARKHIRV.

This sequence belongs to the SmpB family.

The protein localises to the cytoplasm. In terms of biological role, required for rescue of stalled ribosomes mediated by trans-translation. Binds to transfer-messenger RNA (tmRNA), required for stable association of tmRNA with ribosomes. tmRNA and SmpB together mimic tRNA shape, replacing the anticodon stem-loop with SmpB. tmRNA is encoded by the ssrA gene; the 2 termini fold to resemble tRNA(Ala) and it encodes a 'tag peptide', a short internal open reading frame. During trans-translation Ala-aminoacylated tmRNA acts like a tRNA, entering the A-site of stalled ribosomes, displacing the stalled mRNA. The ribosome then switches to translate the ORF on the tmRNA; the nascent peptide is terminated with the 'tag peptide' encoded by the tmRNA and targeted for degradation. The ribosome is freed to recommence translation, which seems to be the essential function of trans-translation. The polypeptide is SsrA-binding protein (Malacoplasma penetrans (strain HF-2) (Mycoplasma penetrans)).